Consider the following 144-residue polypeptide: Large ribosomal subunit protein uL11 (144 aa).

Belongs to the universal ribosomal protein uL11 family. Part of the ribosomal stalk of the 50S ribosomal subunit. Interacts with L10 and the large rRNA to form the base of the stalk. L10 forms an elongated spine to which L12 dimers bind in a sequential fashion forming a multimeric L10(L12)X complex. One or more lysine residues are methylated.

Its function is as follows. Forms part of the ribosomal stalk which helps the ribosome interact with GTP-bound translation factors. The sequence is that of Large ribosomal subunit protein uL11 from Rhodococcus opacus (strain B4).